A 226-amino-acid polypeptide reads, in one-letter code: Adenosine 5'-phosphosulfate reductase (226 aa).

[4Fe-4S] cluster-binding residues include Cys-112, Cys-113, Cys-195, and Cys-198. Cys-221 serves as the catalytic Nucleophile; cysteine thiosulfonate intermediate.

It belongs to the PAPS reductase family. CysH subfamily. The cofactor is [4Fe-4S] cluster.

The protein localises to the cytoplasm. The enzyme catalyses [thioredoxin]-disulfide + sulfite + AMP + 2 H(+) = adenosine 5'-phosphosulfate + [thioredoxin]-dithiol. It functions in the pathway sulfur metabolism; hydrogen sulfide biosynthesis; sulfite from sulfate. Catalyzes the formation of sulfite from adenosine 5'-phosphosulfate (APS) using thioredoxin as an electron donor. The sequence is that of Adenosine 5'-phosphosulfate reductase from Bacillus anthracis (strain A0248).